The sequence spans 274 residues: NAD(P)H dehydrogenase [quinone] 1 (274 aa).

FAD contacts are provided by residues His12, 18–19 (FN), and Gln67. At Ser82 the chain carries Phosphoserine. 104–107 (LQWF) is an FAD binding site. Substrate is bound at residue 126 to 128 (AYT). FAD is bound by residues 148 to 151 (TTGG), Tyr156, and Arg201. The tract at residues 225–274 (PSSLFDLNFQAGFLMKKEVQDEEKNKKFGLSVGHHLGKSIPTDNQIKARK) is important for apoenzyme conformational stability. Glycyl lysine isopeptide (Lys-Gly) (interchain with G-Cter in SUMO2) cross-links involve residues Lys250 and Lys251.

This sequence belongs to the NAD(P)H dehydrogenase (quinone) family. Homodimer. Interacts with PDLIM4 isoform 2; this interaction stabilizes PDLIM4 isoform 2 in response to oxidative stress and protects it from ubiquitin-independent degradation by the core 20S proteasome. Interacts with TP73 (via SAM domain); this interaction is NADH-dependent, stabilizes TP73 in response to oxidative stress and protects it from ubiquitin-independent degradation by the 20S proteasome. Interacts with TP53; this interaction is NADH-dependent, stabilizes TP53 in response to oxidative stress and protects it from ubiquitin-independent degradation by the 20S proteasome. The cofactor is FAD.

It localises to the cytoplasm. The protein localises to the cytosol. It carries out the reaction a quinone + NADH + H(+) = a quinol + NAD(+). The enzyme catalyses a quinone + NADPH + H(+) = a quinol + NADP(+). It catalyses the reaction ubiquinone-10 + NADH + H(+) = ubiquinol-10 + NAD(+). The catalysed reaction is menadione + NADH + H(+) = menadiol + NAD(+). Functionally, flavin-containing quinone reductase that catalyzes two-electron reduction of quinones to hydroquinones using either NADH or NADPH as electron donors. In a ping-pong kinetic mechanism, the electrons are sequentially transferred from NAD(P)H to flavin cofactor and then from reduced flavin to the quinone, bypassing the formation of semiquinone and reactive oxygen species. Regulates cellular redox state primarily through quinone detoxification. Reduces components of plasma membrane redox system such as coenzyme Q and vitamin quinones, producing antioxidant hydroquinone forms. In the process may function as superoxide scavenger to prevent hydroquinone oxidation and facilitate excretion. Alternatively, can activate quinones and their derivatives by generating redox reactive hydroquinones with DNA cross-linking antitumor potential. Acts as a gatekeeper of the core 20S proteasome known to degrade proteins with unstructured regions. Upon oxidative stress, interacts with tumor suppressors TP53 and TP73 in a NADH-dependent way and inhibits their ubiquitin-independent degradation by the 20S proteasome. The sequence is that of NAD(P)H dehydrogenase [quinone] 1 (NQO1) from Pongo abelii (Sumatran orangutan).